The primary structure comprises 125 residues: Small ribosomal subunit protein bS6 (125 aa).

The interval 100–125 (SPMVKAREERKPLTEVENNDFEDAEE) is disordered. Positions 104–113 (KAREERKPLT) are enriched in basic and acidic residues. Acidic residues predominate over residues 116–125 (ENNDFEDAEE).

It belongs to the bacterial ribosomal protein bS6 family.

Functionally, binds together with bS18 to 16S ribosomal RNA. This is Small ribosomal subunit protein bS6 from Histophilus somni (strain 129Pt) (Haemophilus somnus).